The sequence spans 212 residues: External core antigen (212 aa).

An N-terminal signal peptide occupies residues 1-19; it reads MQLFHLCLVISCSCPTVQA. Positions 25 to 27 are HBEAG; the sequence is GWL. The disordered stretch occupies residues 165 to 212; that stretch reads NAPILSTLPETTVVRRRGRSPRRRTPSPRRRRSQSPRRRRSQSRESQC. A compositionally biased stretch (basic residues) spans 178–205; it reads VRRRGRSPRRRTPSPRRRRSQSPRRRRS. A 1; half-length repeat occupies 184 to 190; that stretch reads SPRRRTP. A 3 X 8 AA repeats of S-P-R-R-R-R-S-Q region spans residues 184–206; it reads SPRRRTPSPRRRRSQSPRRRRSQ. Positions 184–212 are excised as a propeptide; that stretch reads SPRRRTPSPRRRRSQSPRRRRSQSRESQC. A run of 2 repeats spans residues 191 to 198 and 199 to 206.

It belongs to the orthohepadnavirus precore antigen family. In terms of assembly, homodimerizes. Phosphorylated. In terms of processing, cleaved by host furin.

Its subcellular location is the secreted. The protein localises to the host nucleus. May regulate immune response to the intracellular capsid in acting as a T-cell tolerogen, by having an immunoregulatory effect which prevents destruction of infected cells by cytotoxic T-cells. This immune regulation may predispose to chronicity during perinatal infections and prevent severe liver injury during adult infections. This Hepatitis B virus genotype B1 subtype adw (isolate Japan/pJDW233/1988) (HBV-B) protein is External core antigen.